A 520-amino-acid chain; its full sequence is Cytochrome P450 716A67 (520 aa).

Residues 4–24 (SLAIYYGIILITVTLGLVYTW) traverse the membrane as a helical segment. A heme-binding site is contributed by C466.

The protein belongs to the cytochrome P450 family. Heme is required as a cofactor.

It localises to the membrane. Catalyzes hydroxylation at the C-2 position of different intermediates of the hemolytic sapogenin biosynthetic pathway downstream of oleanolic acid synthesis. This Medicago truncatula (Barrel medic) protein is Cytochrome P450 716A67.